The following is a 501-amino-acid chain: Glycerol kinase (501 aa).

Thr11 is a binding site for ADP. Residues Thr11, Thr12, and Ser13 each coordinate ATP. Thr11 contacts sn-glycerol 3-phosphate. Residue Arg15 coordinates ADP. Sn-glycerol 3-phosphate contacts are provided by Arg81, Glu82, Tyr133, and Asp242. 5 residues coordinate glycerol: Arg81, Glu82, Tyr133, Asp242, and Gln243. ADP is bound by residues Thr264 and Gly307. Positions 264, 307, 311, and 409 each coordinate ATP. The ADP site is built by Gly409 and Asn413.

This sequence belongs to the FGGY kinase family.

The enzyme catalyses glycerol + ATP = sn-glycerol 3-phosphate + ADP + H(+). The protein operates within polyol metabolism; glycerol degradation via glycerol kinase pathway; sn-glycerol 3-phosphate from glycerol: step 1/1. Its activity is regulated as follows. Inhibited by fructose 1,6-bisphosphate (FBP). Functionally, key enzyme in the regulation of glycerol uptake and metabolism. Catalyzes the phosphorylation of glycerol to yield sn-glycerol 3-phosphate. The polypeptide is Glycerol kinase (Borreliella afzelii (strain PKo) (Borrelia afzelii)).